Here is a 305-residue protein sequence, read N- to C-terminus: N-acetylmuramic acid 6-phosphate etherase (305 aa).

The SIS domain maps to 59–222 (TSKALGKGGR…STGVMVKLGK (164 aa)). Glutamate 87 functions as the Proton donor in the catalytic mechanism. Glutamate 118 is a catalytic residue.

Belongs to the GCKR-like family. MurNAc-6-P etherase subfamily. Homodimer.

It catalyses the reaction N-acetyl-D-muramate 6-phosphate + H2O = N-acetyl-D-glucosamine 6-phosphate + (R)-lactate. The protein operates within amino-sugar metabolism; N-acetylmuramate degradation. Specifically catalyzes the cleavage of the D-lactyl ether substituent of MurNAc 6-phosphate, producing GlcNAc 6-phosphate and D-lactate. The sequence is that of N-acetylmuramic acid 6-phosphate etherase from Crocosphaera subtropica (strain ATCC 51142 / BH68) (Cyanothece sp. (strain ATCC 51142)).